We begin with the raw amino-acid sequence, 261 residues long: Ribonuclease HII (261 aa).

An RNase H type-2 domain is found at 71–259; the sequence is KYIAGVDEVG…VKEAKLHFDS (189 aa). A divalent metal cation is bound by residues D77, E78, and D169.

The protein belongs to the RNase HII family. The cofactor is Mn(2+). Mg(2+) serves as cofactor.

It localises to the cytoplasm. It carries out the reaction Endonucleolytic cleavage to 5'-phosphomonoester.. In terms of biological role, endonuclease that specifically degrades the RNA of RNA-DNA hybrids. The chain is Ribonuclease HII from Listeria monocytogenes serotype 4a (strain HCC23).